A 158-amino-acid polypeptide reads, in one-letter code: Urease accessory protein UreE (158 aa).

Belongs to the UreE family.

It localises to the cytoplasm. Functionally, involved in urease metallocenter assembly. Binds nickel. Probably functions as a nickel donor during metallocenter assembly. In Microcystis aeruginosa (strain NIES-843 / IAM M-2473), this protein is Urease accessory protein UreE.